A 405-amino-acid polypeptide reads, in one-letter code: L-rhamnonate dehydratase (405 aa).

His33 and Arg59 together coordinate substrate. Mg(2+)-binding residues include Asp226, Glu252, and Glu280. The Proton acceptor role is filled by His329. Glu349 contributes to the substrate binding site.

This sequence belongs to the mandelate racemase/muconate lactonizing enzyme family. RhamD subfamily. As to quaternary structure, homooctamer; tetramer of dimers. The cofactor is Mg(2+).

The enzyme catalyses L-rhamnonate = 2-dehydro-3-deoxy-L-rhamnonate + H2O. Functionally, catalyzes the dehydration of L-rhamnonate to 2-keto-3-deoxy-L-rhamnonate (KDR). The chain is L-rhamnonate dehydratase from Salmonella typhi.